Consider the following 290-residue polypeptide: Syntaxin-2 (290 aa).

Over 1 to 266 (MRDRLPDLTA…KYQSKARRKK (266 aa)) the chain is Cytoplasmic. S14 is modified (phosphoserine). Residues 69–106 (EGKIKEELEDLNKEIKKTANRIRGKLKAIEQSCDQDEN) are a coiled coil. The 63-residue stretch at 193–255 (LNEIESRHKD…EHAKEETKKA (63 aa)) folds into the t-SNARE coiled-coil homology domain. Residues 267 to 290 (WIIAAVVVAVIAVLALIIGLTVGK) form a helical; Anchor for type IV membrane protein membrane-spanning segment.

It belongs to the syntaxin family. In terms of assembly, interacts with SYT6 and SYT8; the interaction is Ca(2+)-dependent. Heart, spleen, liver, and testis.

It is found in the membrane. Functionally, essential for epithelial morphogenesis. May mediate Ca(2+)-regulation of exocytosis acrosomal reaction in sperm. The polypeptide is Syntaxin-2 (Stx2) (Rattus norvegicus (Rat)).